A 303-amino-acid chain; its full sequence is Heme A synthase (303 aa).

At 1 to 8 (MFGKKNLK) the chain is on the cytoplasmic side. A helical transmembrane segment spans residues 9 to 29 (WLGVVATLMMTFVQLGGALVT). Over 30 to 67 (KTGSADGCGSSWPLCHGALIPEFFPIDTIIELSHRAVS) the chain is Extracellular. Cys-37 and Cys-44 are oxidised to a cystine. Residue Glu-60 is part of the active site. Residue His-63 participates in heme o binding. A helical transmembrane segment spans residues 68–88 (ALSLLMVLWLVITAWKHIGYI). Topologically, residues 89 to 93 (KEIKP) are cytoplasmic. Residues 94-114 (LSIISVGFLLLQALIGAAAVI) form a helical membrane-spanning segment. Residues 115-125 (WQQNDYVLALH) lie on the Extracellular side of the membrane. Heme o is bound at residue His-125. The helical transmembrane segment at 126–146 (FGISLISFSSVFLITLIIFSI) threads the bilayer. The Cytoplasmic segment spans residues 147-163 (DQKYEAAELYIKKPLRR). Residues 164–184 (LTWLMAIIIYCGVYTGALVRH) traverse the membrane as a helical segment. Residues 185–215 (ADASLAYGGWPLPFHDLVPHSEQDWVQLTHR) lie on the Extracellular side of the membrane. His-214 is a heme b binding site. Residues 216-236 (IMAFIVFTIIMITYIHAVKNY) traverse the membrane as a helical segment. Residues 237–244 (PNNRTVHY) are Cytoplasmic-facing. Residues 245–265 (GYTAAFILVILQVITGALSIM) traverse the membrane as a helical segment. The Extracellular portion of the chain corresponds to 266–270 (TNVNL). The chain crosses the membrane as a helical span at residues 271–291 (IIALFHALFITYLFGMTTYFI). His-276 is a heme b binding site. The Cytoplasmic portion of the chain corresponds to 292 to 303 (MLMLRSVRSDKQ).

It belongs to the COX15/CtaA family. Type 1 subfamily. As to quaternary structure, interacts with CtaB. The cofactor is heme b.

The protein localises to the cell membrane. The enzyme catalyses Fe(II)-heme o + 2 A + H2O = Fe(II)-heme a + 2 AH2. The protein operates within porphyrin-containing compound metabolism; heme A biosynthesis; heme A from heme O: step 1/1. Its function is as follows. Catalyzes the conversion of heme O to heme A by two successive hydroxylations of the methyl group at C8. The first hydroxylation forms heme I, the second hydroxylation results in an unstable dihydroxymethyl group, which spontaneously dehydrates, resulting in the formyl group of heme A. The chain is Heme A synthase from Staphylococcus aureus (strain bovine RF122 / ET3-1).